The following is a 295-amino-acid chain: Glutamyl-Q tRNA(Asp) synthetase (295 aa).

Residues 5–9 (RFAPS) and E41 contribute to the L-glutamate site. Residues 8–18 (PSPTGLLHIGS) carry the 'HIGH' region motif. 4 residues coordinate Zn(2+): C97, C99, Y117, and C121. The L-glutamate site is built by Y178 and R196. Positions 234 to 238 (KWSKQ) match the 'KMSKS' region motif. K237 provides a ligand contact to ATP.

It belongs to the class-I aminoacyl-tRNA synthetase family. GluQ subfamily. Zn(2+) is required as a cofactor.

Its function is as follows. Catalyzes the tRNA-independent activation of glutamate in presence of ATP and the subsequent transfer of glutamate onto a tRNA(Asp). Glutamate is transferred on the 2-amino-5-(4,5-dihydroxy-2-cyclopenten-1-yl) moiety of the queuosine in the wobble position of the QUC anticodon. This Neisseria gonorrhoeae (strain ATCC 700825 / FA 1090) protein is Glutamyl-Q tRNA(Asp) synthetase.